The primary structure comprises 227 residues: UPF0441 protein YPO0661/y3517/YP_2976 (227 aa).

Residues 198–227 are disordered; the sequence is GGFGESVAKQSSMQRSAATSSKTTTRSMGG. Residues 212 to 227 show a composition bias toward low complexity; sequence RSAATSSKTTTRSMGG.

This sequence belongs to the UPF0441 family.

The polypeptide is UPF0441 protein YPO0661/y3517/YP_2976 (Yersinia pestis).